The sequence spans 348 residues: 3-keto-steroid reductase (348 aa).

Leu-18, Thr-41, and Arg-47 together coordinate NADP(+). Catalysis depends on proton donor residues Ser-180 and Tyr-203. 3 residues coordinate NADP(+): Tyr-203, Lys-207, and Ser-238. Residue Lys-207 is the Lowers pKa of active site Tyr of the active site.

Belongs to the short-chain dehydrogenases/reductases (SDR) family. ERG27 subfamily.

The catalysed reaction is a 3beta-hydroxysteroid + NADP(+) = a 3-oxosteroid + NADPH + H(+). It functions in the pathway steroid biosynthesis; zymosterol biosynthesis; zymosterol from lanosterol: step 5/6. In terms of biological role, responsible for the reduction of the keto group on the C-3 of sterols. This chain is 3-keto-steroid reductase (ERG27), found in Candida glabrata (strain ATCC 2001 / BCRC 20586 / JCM 3761 / NBRC 0622 / NRRL Y-65 / CBS 138) (Yeast).